The chain runs to 81 residues: Photosystem I iron-sulfur center (81 aa).

4Fe-4S ferredoxin-type domains are found at residues 1 to 31 (MSHK…MVPW) and 39 to 68 (IASS…IRVY). Positions 11, 14, 17, 21, 48, 51, 54, and 58 each coordinate [4Fe-4S] cluster.

In terms of assembly, the cyanobacterial PSI reaction center is composed of one copy each of PsaA,B,C,D,E,F,I,J,K,L,M and X, and forms trimeric complexes. It depends on [4Fe-4S] cluster as a cofactor.

It is found in the cellular thylakoid membrane. The catalysed reaction is reduced [plastocyanin] + hnu + oxidized [2Fe-2S]-[ferredoxin] = oxidized [plastocyanin] + reduced [2Fe-2S]-[ferredoxin]. Apoprotein for the two 4Fe-4S centers FA and FB of photosystem I (PSI); essential for photochemical activity. FB is the terminal electron acceptor of PSI, donating electrons to ferredoxin. The C-terminus interacts with PsaA/B/D and helps assemble the protein into the PSI complex. Required for binding of PsaD and PsaE to PSI. PSI is a plastocyanin/cytochrome c6-ferredoxin oxidoreductase, converting photonic excitation into a charge separation, which transfers an electron from the donor P700 chlorophyll pair to the spectroscopically characterized acceptors A0, A1, FX, FA and FB in turn. The sequence is that of Photosystem I iron-sulfur center from Crocosphaera subtropica (strain ATCC 51142 / BH68) (Cyanothece sp. (strain ATCC 51142)).